Consider the following 150-residue polypeptide: FAD synthase (150 aa).

ATP-binding positions include 8-9, 13-16, Asp-95, and His-122; these read AF and HPGH.

It belongs to the archaeal FAD synthase family. In terms of assembly, homodimer. A divalent metal cation is required as a cofactor.

The enzyme catalyses FMN + ATP + H(+) = FAD + diphosphate. It functions in the pathway cofactor biosynthesis; FAD biosynthesis; FAD from FMN: step 1/1. Functionally, catalyzes the transfer of the AMP portion of ATP to flavin mononucleotide (FMN) to produce flavin adenine dinucleotide (FAD) coenzyme. In Methanobrevibacter ruminantium (strain ATCC 35063 / DSM 1093 / JCM 13430 / OCM 146 / M1) (Methanobacterium ruminantium), this protein is FAD synthase.